The primary structure comprises 440 residues: Beta-1,3-galactosyl-O-glycosyl-glycoprotein beta-1,6-N-acetylglucosaminyltransferase (440 aa).

Residues 1–12 are Cytoplasmic-facing; sequence MKMAGWKKKLCR. Residues 13-30 form a helical; Signal-anchor for type II membrane protein membrane-spanning segment; that stretch reads GHHLWALGCYMLLAVVSL. At 31-440 the chain is on the lumenal side; that stretch reads RLSLRFKCDV…RHKAIYGTEL (410 aa). Asn-72 and Asn-108 each carry an N-linked (GlcNAc...) asparagine; by host glycan. 4 disulfide bridges follow: Cys-73/Cys-230, Cys-164/Cys-384, Cys-185/Cys-212, and Cys-393/Cys-425.

Belongs to the glycosyltransferase 14 family.

Its subcellular location is the host Golgi apparatus membrane. It catalyses the reaction a 3-O-[beta-D-galactosyl-(1-&gt;3)-N-acetyl-alpha-D-galactosaminyl]-L-seryl-[protein] + UDP-N-acetyl-alpha-D-glucosamine = 3-O-{beta-D-galactosyl-(1-&gt;3)-[N-acetyl-beta-D-glucosaminyl-(1-&gt;6)]-N-acetyl-alpha-D-galactosaminyl}-L-seryl-[protein] + UDP + H(+). It carries out the reaction a 3-O-[beta-D-galactosyl-(1-&gt;3)-N-acetyl-alpha-D-galactosaminyl]-L-threonyl-[protein] + UDP-N-acetyl-alpha-D-glucosamine = a 3-O-{beta-D-galactosyl-(1-&gt;3)-[N-acetyl-beta-D-glucosaminyl-(1-&gt;6)]-N-acetyl-alpha-D-galactosaminyl}-L-threonyl-[protein] + UDP + H(+). The enzyme catalyses a beta-D-Gal-(1-&gt;4)-beta-D-GlcNAc-(1-&gt;3)-beta-D-Gal-(1-&gt;4)-beta-D-GlcNAc derivative + UDP-N-acetyl-alpha-D-glucosamine = a beta-D-Gal-(1-&gt;4)-beta-D-GlcNAc-(1-&gt;3)-[beta-D-GlcNAc-(1-&gt;6)]-beta-D-Gal-(1-&gt;4)-N-acetyl-beta-D-glucosaminyl derivative + UDP + H(+). The catalysed reaction is 3-O-[N-acetyl-beta-D-glucosaminyl-(1-&gt;3)-N-acetyl-alpha-D-galactosaminyl]-L-seryl-[protein] + UDP-N-acetyl-alpha-D-glucosamine = 3-O-[N-acetyl-beta-D-glucosaminyl-(1-&gt;3)-[N-acetyl-beta-D-glucosaminyl-(1-&gt;6)]-N-acetyl-alpha-D-galactosaminyl]-L-seryl-[protein] + UDP + H(+). It catalyses the reaction a 3-O-[N-acetyl-beta-D-glucosaminyl-(1-&gt;3)-N-acetyl-alpha-D-galactosaminyl]-L-threonyl-[protein] + UDP-N-acetyl-alpha-D-glucosamine = 3-O-[N-acetyl-beta-D-glucosaminyl-(1-&gt;3)-[N-acetyl-beta-D-glucosaminyl-(1-&gt;6)]-N-acetyl-alpha-D-galactosaminyl]-L-threonyl-[protein] + UDP + H(+). Its pathway is protein modification; protein glycosylation. Functionally, non-essential glycosyltransferase that can synthesize all known mucin beta 6 N-acetylglucosaminides. Mediates core 2 and core 4 O-glycan branching, 2 important steps in mucin-type biosynthesis. Has also I-branching enzyme activity by converting linear into branched poly-N-acetyllactosaminoglycans. Contributes to the post-translational modifications of structural proteins. The protein is Beta-1,3-galactosyl-O-glycosyl-glycoprotein beta-1,6-N-acetylglucosaminyltransferase (Bo17) of Bos taurus (Bovine).